Consider the following 910-residue polypeptide: Protein translocase subunit SecA (910 aa).

Residues Gln-86, 104–108 (GEGKT), and Asp-508 each bind ATP. The Zn(2+) site is built by Cys-894, Cys-896, Cys-905, and Cys-906.

The protein belongs to the SecA family. As to quaternary structure, monomer and homodimer. Part of the essential Sec protein translocation apparatus which comprises SecA, SecYEG and auxiliary proteins SecDF. Other proteins may also be involved. The cofactor is Zn(2+).

The protein localises to the cell membrane. The protein resides in the cytoplasm. It catalyses the reaction ATP + H2O + cellular proteinSide 1 = ADP + phosphate + cellular proteinSide 2.. Part of the Sec protein translocase complex. Interacts with the SecYEG preprotein conducting channel. Has a central role in coupling the hydrolysis of ATP to the transfer of proteins into and across the cell membrane, serving as an ATP-driven molecular motor driving the stepwise translocation of polypeptide chains across the membrane. The polypeptide is Protein translocase subunit SecA (Acetivibrio thermocellus (strain ATCC 27405 / DSM 1237 / JCM 9322 / NBRC 103400 / NCIMB 10682 / NRRL B-4536 / VPI 7372) (Clostridium thermocellum)).